We begin with the raw amino-acid sequence, 204 residues long: Large ribosomal subunit protein bL25 (204 aa).

Residues 1–20 (MSETYELKAETRDRVGKGSS) form a disordered region.

The protein belongs to the bacterial ribosomal protein bL25 family. CTC subfamily. In terms of assembly, part of the 50S ribosomal subunit; part of the 5S rRNA/L5/L18/L25 subcomplex. Contacts the 5S rRNA. Binds to the 5S rRNA independently of L5 and L18.

This is one of the proteins that binds to the 5S RNA in the ribosome where it forms part of the central protuberance. The polypeptide is Large ribosomal subunit protein bL25 (Rhizobium meliloti (strain 1021) (Ensifer meliloti)).